A 439-amino-acid polypeptide reads, in one-letter code: C4-dicarboxylate transport protein (439 aa).

The next 9 membrane-spanning stretches (helical) occupy residues 9–29, 45–65, 77–97, 145–165, 185–205, 223–243, 290–310, 332–352, and 353–373; these read SLYAQVIVAIIIGVLLGHFLP, LIKMIIAPVIFCTVVIGIAGM, LALLYFEVMSTVALLVGLIIV, AFAKGDVLQVLLVSVLFGFAL, VLFTIVGFIMRAAPVGAFGAM, LMGAFYLTCLFFIFVVLGIVT, VVGLVIPTGYSFNLDGTAIYL, TLLAVLLLTSKGAAGITGSGF, and IVLAATLSAVGHVPVAGLALI. A disordered region spans residues 417-439; sequence NESPQAADQPEKILDQTNTKLGA.

The protein belongs to the dicarboxylate/amino acid:cation symporter (DAACS) (TC 2.A.23) family.

The protein resides in the cell inner membrane. Responsible for the transport of dicarboxylates such as succinate, fumarate, and malate from the periplasm across the membrane. The protein is C4-dicarboxylate transport protein of Janthinobacterium sp. (strain Marseille) (Minibacterium massiliensis).